The chain runs to 209 residues: Claudin-4 (209 aa).

Residues 1 to 9 (MASMGLQVM) are Cytoplasmic-facing. The interval 1 to 103 (MASMGLQVMG…GVLLSVVGGK (103 aa)) is interaction with EPHA2. The helical transmembrane segment at 10-30 (GIALAVLGWLGAILSCALPMW) threads the bilayer. Residues 31-81 (RVTAFIGSNIVTSQTIWEGLWMNCVVQSTGQMQCKVYDSLLALPQDLQAAR) lie on the Extracellular side of the membrane. Cysteine 54 and cysteine 64 form a disulfide bridge. Residues 82–102 (ALIVICIILAVFGVLLSVVGG) form a helical membrane-spanning segment. Residues 103 to 117 (KCTNCVDDESSKAKI) lie on the Cytoplasmic side of the membrane. The helical transmembrane segment at 118-138 (MIVAGVVFLLAGLLVMVPVSW) threads the bilayer. Residues 139 to 160 (TANNVIRDFYNPLVASGQKREM) lie on the Extracellular side of the membrane. Residues 161 to 181 (GASLYVGWAAAGLLILGGALL) form a helical membrane-spanning segment. The Cytoplasmic segment spans residues 182-209 (CFNCPPRNDKPYSAKYSAARSAPASNYV). Tyrosine 208 is modified (phosphotyrosine; by EPHA2). An interactions with TJP1, TJP2 and TJP3 region spans residues 208–209 (YV).

The protein belongs to the claudin family. As to quaternary structure, interacts with EPHA2; phosphorylates CLDN4 and may regulate tight junctions. Directly interacts with TJP1/ZO-1, TJP2/ZO-2 and TJP3/ZO-3. Interacts with CLDN1. Interacts with CLDN8. In terms of processing, phosphorylated. Phosphorylation by EPHA2 is stimulated by EFNA1 and alters interaction with TJP1.

It is found in the cell junction. It localises to the tight junction. The protein resides in the cell membrane. Functionally, channel-forming tight junction protein that mediates paracellular chloride transport in the kidney. Plays a critical role in the paracellular reabsorption of filtered chloride in the kidney collecting ducts. Claudins play a major role in tight junction-specific obliteration of the intercellular space, through calcium-independent cell-adhesion activity. The sequence is that of Claudin-4 (CLDN4) from Bos taurus (Bovine).